The following is a 148-amino-acid chain: Antitoxin Xre (148 aa).

This sequence belongs to the MbcA/ParS/Xre antitoxin family. As to quaternary structure, homodimer. Forms a complex with cognate toxin Rse.

In terms of biological role, antitoxin component of a type II toxin-antitoxin (TA) system. Neutralizes the NAD(+) depleting activity of cognate toxin Res. The polypeptide is Antitoxin Xre (Photorhabdus laumondii subsp. laumondii (strain DSM 15139 / CIP 105565 / TT01) (Photorhabdus luminescens subsp. laumondii)).